Reading from the N-terminus, the 22-residue chain is Motilin (22 aa).

Positions 1–22 (FVPIFTHSELQKIREKERNKGQ) are disordered. Positions 9–22 (ELQKIREKERNKGQ) are enriched in basic and acidic residues.

The protein belongs to the motilin family.

The protein localises to the secreted. Functionally, plays an important role in the regulation of interdigestive gastrointestinal motility and indirectly causes rhythmic contraction of duodenal and colonic smooth muscle. The polypeptide is Motilin (MLN) (Canis lupus familiaris (Dog)).